The following is a 231-amino-acid chain: Antiholin-like protein LrgB (231 aa).

A run of 5 helical transmembrane segments spans residues P7–L24, F34–A56, W91–A113, I149–V171, and A207–I229.

Belongs to the CidB/LrgB family. LrgB subfamily.

The protein localises to the cell membrane. In terms of biological role, inhibits the expression or activity of extracellular murein hydrolases by interacting, possibly with LrgA, with the holin-like protein CidA. The LrgAB and CidA proteins may affect the proton motive force of the membrane. May be involved in programmed cell death (PCD), possibly triggering PCD in response to antibiotics and environmental stresses. This chain is Antiholin-like protein LrgB, found in Bacillus subtilis (strain 168).